Reading from the N-terminus, the 655-residue chain is RNA-binding protein EWS (655 aa).

An EAD (Gln/Pro/Thr-rich) region spans residues 1 to 285 (MASTDYSTYS…GVYGQESGGF (285 aa)). 31 repeat units span residues 8–16 (TYSQAAAQQ), 17–27 (GYSAYTAQPTQ), 28–34 (GYAQTTQ), 35–42 (AYGQQSYG), 43–50 (TYGQPTDV), 51–59 (SYTQAQTTA), 60–68 (TYGQTAYAT), 69–75 (SYGQPPT), 76–84 (GYSTPTAPQ), 85–91 (AYSQPVQ), 92–110 (GYGT…TTQA), 111–116 (SYAAQT), 117–125 (AYGTQPAYP), 126–156 (TYGQ…SSTG), 157–163 (GYNQPSL), 164–170 (GYGQSNY), 171–177 (SYPQVPG), 178–188 (SYPMQPVTAPP), 189–193 (SYPPT), 194–201 (SYSSSQPT), 202–206 (SYDQS), 207–212 (SYSQQN), 213–218 (TYGQPS), 219–224 (SYGQQS), 225–230 (SYGQQS), 231–238 (SYGQQPPT), 239–245 (SYPPQTG), 246–252 (SYSQAPS), 253–259 (QYSQQSS), 260–276 (SYGQ…SSMG), and 277–285 (VYGQESGGF). The interval 8–285 (TYSQAAAQQG…GVYGQESGGF (278 aa)) is 31 X approximate tandem repeats. Residues 121–350 (QPAYPTYGQQ…EGPDLDLGLP (230 aa)) are disordered. Polar residues-rich tracts occupy residues 127 to 137 (YGQQPTATAPT) and 146 to 172 (AETS…NYSY). The segment covering 192 to 266 (PTSYSSSQPT…QSSSYGQQSS (75 aa)) has biased composition (low complexity). The region spanning 256–285 (QQSSSYGQQSSFRQDHPSSMGVYGQESGGF) is the IQ domain. The residue at position 266 (S266) is a Phosphoserine; by PKC. Asymmetric dimethylarginine occurs at positions 300, 302, 304, 309, 314, 317, and 321. Residues 308-334 (DRGGMSRGGRGGGRGGLGAGERGGFNK) show a composition bias toward gly residues. Residues 335 to 350 (PGGPMDEGPDLDLGLP) are compositionally biased toward low complexity. The RRM domain maps to 360–446 (SAIYVQGLND…SKLKVSLARK (87 aa)). K438 carries the N6-acetyllysine modification. Disordered regions lie at residues 447-524 (KPPM…WQCP) and 544-655 (APKP…DRPY). Asymmetric dimethylarginine is present on residues R454 and R463. R470 is subject to Asymmetric dimethylarginine; alternate. Omega-N-methylarginine; alternate is present on R470. Positions 471–489 (GGPGGPGGPGGPMGRMGGR) are enriched in gly residues. An Omega-N-methylarginine modification is found at R485. R489 carries the asymmetric dimethylarginine; by PRMT8 modification. An asymmetric dimethylarginine mark is found at R493, R499, and R502. Position 505 is an asymmetric dimethylarginine; alternate (R505). Position 505 is an omega-N-methylarginine; alternate (R505). The segment at 517 to 548 (RAGDWQCPNPGCGNQNFAWRTECNQCKAPKPE) adopts a RanBP2-type zinc-finger fold. Over residues 550–559 (FLPPPFPPPG) the composition is skewed to pro residues. Residues R562 and R564 each carry the asymmetric dimethylarginine modification. A compositionally biased stretch (gly residues) spans 565–590 (GGPGGMRGGRGGLMDRGGPGGMFRGG). Asymmetric dimethylarginine; alternate; by PRMT8 is present on R571. Position 571 is an omega-N-methylarginine; alternate; by PRMT8 (R571). Residues R574, R580, R588, and R591 each carry the asymmetric dimethylarginine modification. The segment covering 591–605 (RGGDRGGFRGGRGMD) has biased composition (basic and acidic residues). Asymmetric dimethylarginine; alternate; by PRMT8 is present on R595. R595 is modified (omega-N-methylarginine; alternate; by PRMT8). R599 carries the asymmetric dimethylarginine modification. The residue at position 602 (R602) is an Asymmetric dimethylarginine; by PRMT8. R606 carries the asymmetric dimethylarginine; alternate; by PRMT8 modification. R606 is modified (omega-N-methylarginine; alternate; by PRMT8). A compositionally biased stretch (gly residues) spans 606-617 (RGGFGGGRRGGP). Position 614 is an asymmetric dimethylarginine; alternate (R614). R614 bears the Omega-N-methylarginine; alternate mark. Asymmetric dimethylarginine occurs at positions 632 and 635. The Nuclear localization signal motif lies at 638–655 (PGKMDKGEHRQERRDRPY). Over residues 640-655 (KMDKGEHRQERRDRPY) the composition is skewed to basic and acidic residues.

It belongs to the RRM TET family. Binds RNA, POLR2C, SF1 and calmodulin. Interacts with PTK2B and TDRD3. Forms a complex with REC8, PRDM9, SYCP3 and SYCP1; complex formation is dependent of phosphorylated form of REC8 and requires PRDM9 bound to hotspot DNA; EWSR1 joins PRDM9 with the chromosomal axis through REC8. Phosphorylated; calmodulin-binding inhibits phosphorylation of Ser-266. Post-translationally, highly methylated on arginine residues. Methylation is mediated by PRMT1 and, at lower level by PRMT8.

The protein localises to the nucleus. It is found in the cytoplasm. Its subcellular location is the cell membrane. Its function is as follows. Binds to ssRNA containing the consensus sequence 5'-AGGUAA-3'. Might function as a transcriptional repressor. This chain is RNA-binding protein EWS (Ewsr1), found in Mus musculus (Mouse).